We begin with the raw amino-acid sequence, 350 residues long: 3-isopropylmalate dehydrogenase (350 aa).

76 to 87 (GPKWDNAPKRPE) contacts NAD(+). The substrate site is built by R94, R104, R132, and D217. Positions 217, 241, and 245 each coordinate Mg(2+). Position 275–287 (275–287 (GSAPDIANQNIAN)) interacts with NAD(+).

It belongs to the isocitrate and isopropylmalate dehydrogenases family. LeuB type 1 subfamily. As to quaternary structure, homodimer. Requires Mg(2+) as cofactor. It depends on Mn(2+) as a cofactor.

Its subcellular location is the cytoplasm. It catalyses the reaction (2R,3S)-3-isopropylmalate + NAD(+) = 4-methyl-2-oxopentanoate + CO2 + NADH. Its pathway is amino-acid biosynthesis; L-leucine biosynthesis; L-leucine from 3-methyl-2-oxobutanoate: step 3/4. Catalyzes the oxidation of 3-carboxy-2-hydroxy-4-methylpentanoate (3-isopropylmalate) to 3-carboxy-4-methyl-2-oxopentanoate. The product decarboxylates to 4-methyl-2 oxopentanoate. This is 3-isopropylmalate dehydrogenase from Listeria innocua serovar 6a (strain ATCC BAA-680 / CLIP 11262).